The primary structure comprises 1190 residues: Tight junction protein 2 (1190 aa).

Phosphoserine is present on S16. The 88-residue stretch at 33–120 (TVTLQKDSKR…VAAIVVKRPR (88 aa)) folds into the PDZ 1 domain. A phosphoserine mark is found at S130, S150, S153, S163, S168, S170, S174, S200, S220, S232, S244, S266, S325, S398, S400, S406, S415, S424, S430, and S431. The segment at 152–306 (RSGYSERSRL…PEPRGRPGPI (155 aa)) is disordered. Residues 169-291 (RSWEDSPERG…PRSRSREHPH (123 aa)) show a composition bias toward basic and acidic residues. The PDZ 2 domain maps to 307-385 (GVLLMKSRAN…KLQLVVLRDS (79 aa)). Residues 408–506 (IESNRSFSPE…RPSPEDEAIY (99 aa)) are disordered. Positions 415–446 (SPEERRHQYSDYDYHSSSEKLKERPSSREDTP) are enriched in basic and acidic residues. T455 carries the post-translational modification Phosphothreonine. Residue S499 is modified to Phosphoserine. In terms of domain architecture, PDZ 3 spans 509–590 (NTKMVRFKKG…GEMVTILAQS (82 aa)). Y574 bears the Phosphotyrosine mark. The region spanning 604-669 (GDSFFIRSHF…PNKSRAEQMA (66 aa)) is the SH3 domain. The region spanning 678 to 876 (NAGDRADFWR…WFGSLKDTIQ (199 aa)) is the Guanylate kinase-like domain. Phosphoserine is present on residues S702 and S902. Position 905 is a phosphothreonine (T905). Residues S913 and S920 each carry the phosphoserine modification. 2 disordered regions span residues 920 to 1079 (SDFE…KSVL) and 1105 to 1190 (NARI…DTEL). Phosphothreonine is present on residues T925 and T933. The span at 956-967 (VQHEESIRKPSP) shows a compositional bias: basic and acidic residues. A phosphoserine mark is found at S966, S978, S986, S1006, S1067, and S1068. Basic and acidic residues predominate over residues 994-1014 (EPPKAKTQNKEESYDFSKSYE). Acidic residues predominate over residues 1060–1072 (EGEEVGESSEEQD). Y1118 bears the Phosphotyrosine mark. T1131 is modified (phosphothreonine). S1147 and S1159 each carry phosphoserine. The segment covering 1166-1175 (YRQQLSEHSK) has biased composition (basic and acidic residues). Residues 1188 to 1190 (TEL) form an interaction with SCRIB region.

This sequence belongs to the MAGUK family. As to quaternary structure, homodimer. Interacts (via PDZ2 domain) with TJP1/ZO1 (via PDZ2 domain). Interacts with OCLN. Interacts with UBN1. Interacts with SAFB in the nucleus. Interacts with SCRIB. Interacts with USP53 (via the C-terminal region). Interacts with claudins, including CLDN1, CLDN2, CLDN3, CLDN5 and CLDN7. Interacts with CLDN18. Interacts (via N-terminus) with CTNNA1. In terms of tissue distribution, this protein is found in epithelial cell junctions. Isoform A1 is abundant in the heart and brain. Detected in brain and skeletal muscle. It is present almost exclusively in normal tissues. Isoform C1 is expressed at high level in the kidney, pancreas, heart and placenta. Not detected in brain and skeletal muscle. Found in normal as well as in most neoplastic tissues.

It localises to the cell junction. The protein localises to the adherens junction. Its subcellular location is the cell membrane. The protein resides in the tight junction. It is found in the nucleus. Its function is as follows. Plays a role in tight junctions and adherens junctions. Acts as a positive regulator of RANKL-induced osteoclast differentiation, potentially via mediating downstream transcriptional activity. The chain is Tight junction protein 2 from Homo sapiens (Human).